The sequence spans 104 residues: Large ribosomal subunit protein bL21 (104 aa).

Belongs to the bacterial ribosomal protein bL21 family. In terms of assembly, part of the 50S ribosomal subunit. Contacts protein L20.

In terms of biological role, this protein binds to 23S rRNA in the presence of protein L20. The sequence is that of Large ribosomal subunit protein bL21 from Desulfosudis oleivorans (strain DSM 6200 / JCM 39069 / Hxd3) (Desulfococcus oleovorans).